Here is a 267-residue protein sequence, read N- to C-terminus: Neutrophil elastase (267 aa).

Positions 1-27 (MTLGRRLACLFLACVLPALLLGGTALA) are cleaved as a signal peptide. The propeptide occupies 28-29 (SE). One can recognise a Peptidase S1 domain in the interval 30-247 (IVGGRRARPH…FVNWIDSIIQ (218 aa)). A disulfide bridge connects residues C55 and C71. H70 functions as the Charge relay system in the catalytic mechanism. A glycan (N-linked (GlcNAc...) asparagine) is linked at N88. D117 acts as the Charge relay system in catalysis. N-linked (GlcNAc...) asparagine glycans are attached at residues N124 and N173. 3 cysteine pairs are disulfide-bonded: C151–C208, C181–C187, and C198–C223. The active-site Charge relay system is S202.

The protein belongs to the peptidase S1 family. Elastase subfamily. As to quaternary structure, interacts with NOTCH2NL. Interacts with agaphelin, an antihemostatic protein from Anopheles gambiae. Bone marrow cells. Neutrophil.

Its subcellular location is the cytoplasmic vesicle. The protein resides in the phagosome. It carries out the reaction Hydrolysis of proteins, including elastin. Preferential cleavage: Val-|-Xaa &gt; Ala-|-Xaa.. Its function is as follows. Serine protease that modifies the functions of natural killer cells, monocytes and granulocytes. Inhibits C5a-dependent neutrophil enzyme release and chemotaxis. Promotes cleavage of GSDMB, thereby inhibiting pyroptosis. Promotes blood coagulation. Through the activation of the platelet fibrinogen receptor integrin alpha-IIb/beta-3, potentiates platelet aggregation induced by a threshold concentration of cathepsin G (CTSG). Cleaves and thus inactivates tissue factor pathway inhibitor (TFPI). Capable of killing E.coli but not S.aureus in vitro; digests outer membrane protein A (ompA) in E.coli and K.pneumoniae. The sequence is that of Neutrophil elastase (ELANE) from Homo sapiens (Human).